Here is a 145-residue protein sequence, read N- to C-terminus: Cell division protein SepF (145 aa).

This sequence belongs to the SepF family. Homodimer. Interacts with FtsZ.

The protein localises to the cytoplasm. Cell division protein that is part of the divisome complex and is recruited early to the Z-ring. Probably stimulates Z-ring formation, perhaps through the cross-linking of FtsZ protofilaments. Its function overlaps with FtsA. This chain is Cell division protein SepF, found in Lactobacillus helveticus (strain DPC 4571).